The primary structure comprises 88 residues: Molybdopterin synthase sulfur carrier subunit (88 aa).

Gly-88 carries the post-translational modification 1-thioglycine; alternate. Gly-88 carries the post-translational modification Glycyl adenylate; alternate.

Belongs to the MoaD family. MOCS2A subfamily. In terms of assembly, heterotetramer; composed of 2 small (MOCS2A) and 2 large (MOCS2B) subunits. C-terminal thiocarboxylation occurs in 2 steps, it is first acyl-adenylated (-COAMP) via the hesA/moeB/thiF part of MOCS3, then thiocarboxylated (-COSH) via the rhodanese domain of MOCS3. Widely expressed. Highest levels are found in heart and skeletal muscle. Lower levels are present in brain, kidney and pancreas. Very low levels are found in lung and peripheral blood leukocytes.

The protein localises to the cytoplasm. It localises to the cytosol. It participates in cofactor biosynthesis; molybdopterin biosynthesis. Functionally, acts as a sulfur carrier required for molybdopterin biosynthesis. Component of the molybdopterin synthase complex that catalyzes the conversion of precursor Z into molybdopterin by mediating the incorporation of 2 sulfur atoms into precursor Z to generate a dithiolene group. In the complex, serves as sulfur donor by being thiocarboxylated (-COSH) at its C-terminus by MOCS3. After interaction with MOCS2B, the sulfur is then transferred to precursor Z to form molybdopterin. The polypeptide is Molybdopterin synthase sulfur carrier subunit (Homo sapiens (Human)).